We begin with the raw amino-acid sequence, 340 residues long: Phenylalanine--tRNA ligase alpha subunit (340 aa).

Glu254 contributes to the Mg(2+) binding site.

This sequence belongs to the class-II aminoacyl-tRNA synthetase family. Phe-tRNA synthetase alpha subunit type 1 subfamily. As to quaternary structure, tetramer of two alpha and two beta subunits. Mg(2+) serves as cofactor.

The protein localises to the cytoplasm. The catalysed reaction is tRNA(Phe) + L-phenylalanine + ATP = L-phenylalanyl-tRNA(Phe) + AMP + diphosphate + H(+). This is Phenylalanine--tRNA ligase alpha subunit from Caldicellulosiruptor bescii (strain ATCC BAA-1888 / DSM 6725 / KCTC 15123 / Z-1320) (Anaerocellum thermophilum).